Reading from the N-terminus, the 365-residue chain is tRNA/tmRNA (uracil-C(5))-methyltransferase (365 aa).

S-adenosyl-L-methionine contacts are provided by glutamine 189, tyrosine 217, asparagine 222, glutamate 238, and aspartate 298. The active-site Nucleophile is the cysteine 323. Residue glutamate 357 is the Proton acceptor of the active site.

Belongs to the class I-like SAM-binding methyltransferase superfamily. RNA M5U methyltransferase family. TrmA subfamily.

It catalyses the reaction uridine(54) in tRNA + S-adenosyl-L-methionine = 5-methyluridine(54) in tRNA + S-adenosyl-L-homocysteine + H(+). The enzyme catalyses uridine(341) in tmRNA + S-adenosyl-L-methionine = 5-methyluridine(341) in tmRNA + S-adenosyl-L-homocysteine + H(+). Functionally, dual-specificity methyltransferase that catalyzes the formation of 5-methyluridine at position 54 (m5U54) in all tRNAs, and that of position 341 (m5U341) in tmRNA (transfer-mRNA). The polypeptide is tRNA/tmRNA (uracil-C(5))-methyltransferase (Proteus mirabilis (strain HI4320)).